Here is a 429-residue protein sequence, read N- to C-terminus: C4-dicarboxylate transport protein (429 aa).

The next 8 helical transmembrane spans lie at 9 to 29 (VLYV…HYYP), 45 to 65 (LIKM…IAGM), 79 to 99 (LLYF…ATHI), 149 to 169 (GEIL…AHLG), 185 to 205 (VLFG…FGAM), 223 to 243 (LIGT…GAIA), 308 to 328 (IYMT…LTWM), and 356 to 376 (AATL…ILGI).

Belongs to the dicarboxylate/amino acid:cation symporter (DAACS) (TC 2.A.23) family.

The protein localises to the cell inner membrane. Functionally, responsible for the transport of dicarboxylates such as succinate, fumarate, and malate from the periplasm across the membrane. This chain is C4-dicarboxylate transport protein, found in Burkholderia multivorans (strain ATCC 17616 / 249).